We begin with the raw amino-acid sequence, 297 residues long: Thiosulfate sulfurtransferase (297 aa).

Lys-14 bears the N6-acetyllysine; alternate mark. Lys-14 is modified (N6-succinyllysine; alternate). The 119-residue stretch at 25 to 143 folds into the Rhodanese 1 domain; the sequence is VGPGLRVLDA…WLKEGHPVTS (119 aa). Residue Ser-35 is glycosylated (O-linked (GlcNAc) serine). Ser-38 bears the Phosphoserine mark. An N6-acetyllysine; alternate modification is found at Lys-136. An N6-succinyllysine; alternate modification is found at Lys-136. The interval 144–159 is hinge; the sequence is EPSRPEPAIFKATLNR. Lys-163 is subject to N6-acetyllysine. The Rhodanese 2 domain maps to 173–288; it reads ESKRFQLVDS…WFHRAPPETW (116 aa). The residue at position 175 (Lys-175) is an N6-acetyllysine; alternate. Lys-175 carries the post-translational modification N6-succinyllysine; alternate. Arg-187 contributes to the substrate binding site. Lys-224 is modified (N6-acetyllysine; alternate). An N6-succinyllysine; alternate modification is found at Lys-224. Lys-236 is modified (N6-acetyllysine). Lys-237 is modified (N6-acetyllysine; alternate). Position 237 is an N6-succinyllysine; alternate (Lys-237). The active-site Cysteine persulfide intermediate is the Cys-248. Position 250 (Lys-250) interacts with substrate.

Monomer. As to expression, expressed in numerous tissues.

It localises to the mitochondrion matrix. It carries out the reaction thiosulfate + hydrogen cyanide = thiocyanate + sulfite + 2 H(+). Together with MRPL18, acts as a mitochondrial import factor for the cytosolic 5S rRNA. Only the nascent unfolded cytoplasmic form is able to bind to the 5S rRNA. Formation of iron-sulfur complexes and cyanide detoxification. Binds molecular oxygen and sulfur. The chain is Thiosulfate sulfurtransferase (TST) from Bos taurus (Bovine).